The primary structure comprises 258 residues: MGVEKIKAAFENGKKAFIPYVMGGDGGLEKLKERIRFLDEAGASIVEIGIPFSDPVADGPTIQRAGKRALDSGVTVKGIFQALIEVRKEVQIPFVLMTYLNPVLAFGKEQFIENCIEAGVDGIIVPDLPYEEQDIIAPLLRTANIALIPLVTVTSPIERIEKITSESEGFVYAVTVAGVTGVRQNFKEEIHSYLEKVKSHTHLPVVAGFGISTKEHVEEMITICDGVVVGSKVIELLENEKREEICELIQATKQKEEA.

Catalysis depends on proton acceptor residues Glu47 and Asp58.

This sequence belongs to the TrpA family. In terms of assembly, tetramer of two alpha and two beta chains.

It catalyses the reaction (1S,2R)-1-C-(indol-3-yl)glycerol 3-phosphate + L-serine = D-glyceraldehyde 3-phosphate + L-tryptophan + H2O. It participates in amino-acid biosynthesis; L-tryptophan biosynthesis; L-tryptophan from chorismate: step 5/5. Functionally, the alpha subunit is responsible for the aldol cleavage of indoleglycerol phosphate to indole and glyceraldehyde 3-phosphate. In Bacillus cereus (strain ATCC 10987 / NRS 248), this protein is Tryptophan synthase alpha chain.